The primary structure comprises 130 residues: Small ribosomal subunit protein uS9 (130 aa).

It belongs to the universal ribosomal protein uS9 family.

The polypeptide is Small ribosomal subunit protein uS9 (Pseudomonas aeruginosa (strain LESB58)).